A 115-amino-acid polypeptide reads, in one-letter code: Holo-[acyl-carrier-protein] synthase (115 aa).

Asp-8 and Glu-50 together coordinate Mg(2+).

This sequence belongs to the P-Pant transferase superfamily. AcpS family. Mg(2+) is required as a cofactor.

The protein localises to the cytoplasm. The catalysed reaction is apo-[ACP] + CoA = holo-[ACP] + adenosine 3',5'-bisphosphate + H(+). Functionally, transfers the 4'-phosphopantetheine moiety from coenzyme A to a Ser of acyl-carrier-protein. The sequence is that of Holo-[acyl-carrier-protein] synthase from Pseudarthrobacter chlorophenolicus (strain ATCC 700700 / DSM 12829 / CIP 107037 / JCM 12360 / KCTC 9906 / NCIMB 13794 / A6) (Arthrobacter chlorophenolicus).